Consider the following 624-residue polypeptide: uncharacterized protein (624 aa).

The signal sequence occupies residues 1–29 (MRFHRQGTAATVGVLLIVLLGFCWKLSES). N-linked (GlcNAc...) asparagine glycosylation is found at asparagine 68, asparagine 150, asparagine 219, asparagine 366, asparagine 441, asparagine 447, asparagine 464, and asparagine 528. The interval 141–174 (LERRHGRFGNGTHGDHPKGPPPPPPPDEKDRGSQ) is disordered.

It localises to the secreted. This is an uncharacterized protein from Saccharomyces cerevisiae (strain ATCC 204508 / S288c) (Baker's yeast).